Consider the following 173-residue polypeptide: Large ribosomal subunit protein uL15 (173 aa).

Basic and acidic residues predominate over residues M1 to G11. Positions M1–E50 are disordered. Over residues R21–Q35 the composition is skewed to gly residues.

This sequence belongs to the universal ribosomal protein uL15 family. In terms of assembly, part of the 50S ribosomal subunit.

In terms of biological role, binds to the 23S rRNA. This chain is Large ribosomal subunit protein uL15, found in Rhizorhabdus wittichii (strain DSM 6014 / CCUG 31198 / JCM 15750 / NBRC 105917 / EY 4224 / RW1) (Sphingomonas wittichii).